Here is a 179-residue protein sequence, read N- to C-terminus: Adenine phosphoribosyltransferase (179 aa).

The protein belongs to the purine/pyrimidine phosphoribosyltransferase family. Homodimer.

Its subcellular location is the cytoplasm. The catalysed reaction is AMP + diphosphate = 5-phospho-alpha-D-ribose 1-diphosphate + adenine. It functions in the pathway purine metabolism; AMP biosynthesis via salvage pathway; AMP from adenine: step 1/1. In terms of biological role, catalyzes a salvage reaction resulting in the formation of AMP, that is energically less costly than de novo synthesis. The sequence is that of Adenine phosphoribosyltransferase from Ruegeria pomeroyi (strain ATCC 700808 / DSM 15171 / DSS-3) (Silicibacter pomeroyi).